A 390-amino-acid chain; its full sequence is GTPase Obg/CgtA (390 aa).

Positions 1–159 (MKFVDEAVIK…RDIRLELLLL (159 aa)) constitute an Obg domain. Residues 160-333 (ADVGMLGMPN…LCMKLAEFMD (174 aa)) enclose the OBG-type G domain. GTP-binding positions include 166-173 (GMPNAGKS), 191-195 (FTTLV), 213-216 (DIPG), 283-286 (NKVD), and 314-316 (SAA). Mg(2+) contacts are provided by Ser-173 and Thr-193.

Belongs to the TRAFAC class OBG-HflX-like GTPase superfamily. OBG GTPase family. In terms of assembly, monomer. Interacts with SpoT (AC Q9KNM2) in a yeast 2-hybrid assay. It depends on Mg(2+) as a cofactor.

Its subcellular location is the cytoplasm. Functionally, depletion experiments lead to gene down regulation and a dramatic increase in ppGpp levels, like those seen in the stringent response. There is no change in cell morphology in depletion experiments, but cells are very sensitive to the DNA-damaging agent hydroxyurea and are very elongated. Overexpression reduces growth and leads to elongated cells. Overexpression of proteins with C-terminal deletions of 29 or 62 amino acids showed fewer elongated cells. Its function is as follows. An essential GTPase which binds GTP, GDP and possibly (p)ppGpp with moderate affinity, with high nucleotide exchange rates and a fairly low GTP hydrolysis rate. It may play a role in control of the cell cycle, stress response, ribosome biogenesis and in those bacteria that undergo differentiation, in morphogenesis control. GTPase activity is stimulated by 50S ribosomal subunits. The sequence is that of GTPase Obg/CgtA from Vibrio cholerae serotype O1 (strain ATCC 39315 / El Tor Inaba N16961).